The sequence spans 881 residues: Receptor-like protein 41 (881 aa).

The signal sequence occupies residues 1-21 (MSELLLRLNFLLLLLLSCVSP). The Extracellular portion of the chain corresponds to 22-844 (SSFVTFNNPV…EEQEQVLNWE (823 aa)). 5 N-linked (GlcNAc...) asparagine glycosylation sites follow: Asn-58, Asn-70, Asn-91, Asn-109, and Asn-145. LRR repeat units lie at residues 97–121 (FHELRSLLLIHNNFTSSSISSKFGM), 122–145 (LNKLEVLFLSSSGFLGQVPFSFSN), 146–169 (LSMLSALDLSDNELTGSLSFVRNL), 170–195 (RKLRVLDVSYNHFSGILNPNSSLFEL), 197–219 (HLTYLSLGSNSFTSSTLPYEFGN), 220–244 (LNKLELLDVSSNSFFGQVPPTISNL), 245–267 (TQLTELYLPLNDFTGSLPLVQNL), 268–291 (TKLSILALFGNHFSGTIPSSLFTM), 293–317 (FLSYLSLKGNNLNGSIEVPNSSSSS), 319–340 (LESLYLGKNHFEGKILKPISKL), 342–364 (NLKELDLSFLSTSYPIDLSLFSS), 365–390 (FKSLLVLDLTGDWISQAGLSSDSYIS), 391–412 (LTLEALYMKQCNISDFPNILKS), 413–437 (LPNLECIDVSNNRVSGKIPEWLWSL), 439–462 (RLSSVFIGDNLLTGFEGSSEILVN), and 463–486 (SSVQILVLDSNSLEGALPHLPLSI). A glycan (N-linked (GlcNAc...) asparagine) is linked at Asn-189. N-linked (GlcNAc...) asparagine glycans are attached at residues Asn-243 and Asn-266. Asn-305 and Asn-312 each carry an N-linked (GlcNAc...) asparagine glycan. Asn-402 carries N-linked (GlcNAc...) asparagine glycosylation. An N-linked (GlcNAc...) asparagine glycan is attached at Asn-462. An LRR 17; degenerate repeat occupies 487 to 506 (IYFSARYNRFKGDIPLSICN). 2 N-linked (GlcNAc...) asparagine glycosylation sites follow: Asn-506 and Asn-519. LRR repeat units follow at residues 507–528 (RSSLDVLDLRYNNFTGPIPPCL), 529–552 (SNLLFLNLRKNNLEGSIPDTYFAD), 554–576 (PLRSLDVGYNRLTGKLPRSLLNC), 578–599 (ALQFLSVDHNGIEDTFPFYLKV), 600–624 (LPKLQVLLLSSNKFYGPLSPPNQGS), 627–651 (FPELRILEIAGNKLTGSLPQDFFVN), 701–724 (TSSATIDLSGNRLEGEIPESIGLL), 725–748 (KALIALNLSNNAFTGHIPLSLANL), 749–772 (VKIESLDLSSNQLSGTIPNGLGTL), and 774–797 (FLAYVNVSHNQLNGEIPQGTQITG). N-linked (GlcNAc...) asparagine glycosylation occurs at Asn-575. Residue Asn-731 is glycosylated (N-linked (GlcNAc...) asparagine). The N-linked (GlcNAc...) asparagine glycan is linked to Asn-779. The helical transmembrane segment at 845 to 865 (GVAIGYGVGVLLGLAIAQLIA) threads the bilayer. At 866 to 881 (SYKPEWLACLIKSRNR) the chain is on the cytoplasmic side.

It belongs to the RLP family.

Its subcellular location is the cell membrane. Its function is as follows. May be involved in ABA-induced senescence responses. This is Receptor-like protein 41 from Arabidopsis thaliana (Mouse-ear cress).